The primary structure comprises 449 residues: DNA-directed RNA polymerase subunit Rpo1C (449 aa).

The segment at 1–68 (MQDVIKKIED…EGEELLKAVE (68 aa)) is unknown. Positions 69–449 (DEYLRILKVR…TGSVSVIMKK (381 aa)) are DNA-directed RNA polymerase subunit Rpo1C.

The protein belongs to the RNA polymerase beta' chain family. As to quaternary structure, part of the RNA polymerase complex.

It is found in the cytoplasm. The catalysed reaction is RNA(n) + a ribonucleoside 5'-triphosphate = RNA(n+1) + diphosphate. In terms of biological role, DNA-dependent RNA polymerase (RNAP) catalyzes the transcription of DNA into RNA using the four ribonucleoside triphosphates as substrates. Forms part of the jaw domain. This Methanothermobacter thermautotrophicus (strain Winter) (Methanobacterium thermoautotrophicum) protein is DNA-directed RNA polymerase subunit Rpo1C.